The primary structure comprises 327 residues: L-serine dehydratase/L-threonine deaminase (327 aa).

N6-(pyridoxal phosphate)lysine is present on K41.

This sequence belongs to the serine/threonine dehydratase family. As to quaternary structure, homodimer. Pyridoxal 5'-phosphate serves as cofactor.

The protein localises to the cytoplasm. It catalyses the reaction L-serine = pyruvate + NH4(+). It carries out the reaction L-threonine = 2-oxobutanoate + NH4(+). It functions in the pathway carbohydrate biosynthesis; gluconeogenesis. Catalyzes the pyridoxal-phosphate-dependent dehydrative deamination of L-threonine and L-serine to ammonia and alpha-ketobutyrate and pyruvate, respectively. This chain is L-serine dehydratase/L-threonine deaminase (SDS), found in Bos taurus (Bovine).